A 303-amino-acid chain; its full sequence is Indole-3-glycerol phosphate synthase (303 aa).

This sequence belongs to the TrpC family.

It carries out the reaction 1-(2-carboxyphenylamino)-1-deoxy-D-ribulose 5-phosphate + H(+) = (1S,2R)-1-C-(indol-3-yl)glycerol 3-phosphate + CO2 + H2O. It functions in the pathway amino-acid biosynthesis; L-tryptophan biosynthesis; L-tryptophan from chorismate: step 4/5. This chain is Indole-3-glycerol phosphate synthase, found in Acaryochloris marina (strain MBIC 11017).